Consider the following 79-residue polypeptide: Small ribosomal subunit protein bS16c (79 aa).

Belongs to the bacterial ribosomal protein bS16 family.

It localises to the plastid. It is found in the chloroplast. This is Small ribosomal subunit protein bS16c from Staurastrum punctulatum (Green alga).